Reading from the N-terminus, the 594-residue chain is Choline dehydrogenase, mitochondrial (594 aa).

A mitochondrion-targeting transit peptide spans 1–29 (MWCLLRGLGRPGALARGALGQQQSLGARA). 42-71 (SYVVVGAGSAGCVLAGRLTEDPAERVLLLE) contributes to the FAD binding site. Position 436 is an N6-succinyllysine (Lys436). An N6-acetyllysine; alternate mark is found at Lys484 and Lys496. Residues Lys484 and Lys496 each carry the N6-succinyllysine; alternate modification. The active-site Proton acceptor is the His511. Lys580 is subject to N6-acetyllysine.

Belongs to the GMC oxidoreductase family. FAD is required as a cofactor.

The protein resides in the mitochondrion inner membrane. The enzyme catalyses choline + A = betaine aldehyde + AH2. Its pathway is amine and polyamine biosynthesis; betaine biosynthesis via choline pathway; betaine aldehyde from choline (cytochrome c reductase route): step 1/1. The polypeptide is Choline dehydrogenase, mitochondrial (CHDH) (Homo sapiens (Human)).